The primary structure comprises 260 residues: 14-3-3 protein 4 (260 aa).

The tract at residues 238–260 (DNADDVGDDIKEASKPESGEGQQ) is disordered. Over residues 245–260 (DDIKEASKPESGEGQQ) the composition is skewed to basic and acidic residues.

Belongs to the 14-3-3 family. As to quaternary structure, homodimer.

This is 14-3-3 protein 4 (TFT4) from Solanum lycopersicum (Tomato).